Consider the following 318-residue polypeptide: uncharacterized protein (318 aa).

4 helical membrane passes run 112–132 (VIGVLSFLFSKFVFTLVPVFL), 147–167 (IAIESLFKLILLLGYIYFLSM), 209–229 (CGSSFILFTIIVGMFVYLLVP), and 237–257 (VIDRVALIPVVLGISFEVLQL).

The protein resides in the cell membrane. This is an uncharacterized protein from Bacillus subtilis (strain 168).